The chain runs to 1305 residues: Cyclin-G-associated kinase (1305 aa).

S2 is modified (N-acetylserine). Phosphoserine occurs at positions 2 and 16. The Protein kinase domain occupies 40-317 (LRVRRVLAEG…EVVRQLQEIA (278 aa)). Residues 46–54 (LAEGGFAFV) and K69 each bind ATP. D173 functions as the Proton acceptor in the catalytic mechanism. Residues 397 to 564 (SVANYAKGDL…EYVCDMVAEE (168 aa)) enclose the Phosphatase tensin-type domain. A Phosphoserine modification is found at S454. The 139-residue stretch at 570–708 (SKPMLVKSVV…FQVNLEVEVE (139 aa)) folds into the C2 tensin-type domain. Disordered regions lie at residues 707–732 (VEPRDRPSREAPPWENTSLRGLNPKI) and 747–854 (FGKP…AAGT). S768 is subject to Phosphoserine. T774 carries the phosphothreonine modification. Residues 776-789 (SDSPQSSSTDTNHF) show a composition bias toward polar residues. A Phosphoserine modification is found at S781. T792 bears the Phosphothreonine mark. Over residues 805 to 816 (LDNTSPKESQSV) the composition is skewed to polar residues. S809, S824, and S827 each carry phosphoserine. Acidic residues predominate over residues 822 to 832 (DGSEVSDEEEA). Residues 836–848 (SEERKPGAGEDTP) are compositionally biased toward basic and acidic residues. Residue S938 is modified to Phosphoserine. The segment at 1037–1139 (DTWADTATPG…WTPQAKPAPR (103 aa)) is disordered. Residues 1084–1099 (DLSDLSSSLQGLPAGL) show a composition bias toward low complexity. The span at 1111–1132 (TQKSNSPWQANRPTAPGTSWTP) shows a compositional bias: polar residues. R1122 carries the omega-N-methylarginine modification. S1171 is subject to Phosphoserine. The J domain occupies 1241-1305 (SRWTPVSMAD…FENQGSRPLF (65 aa)).

This sequence belongs to the protein kinase superfamily. Ser/Thr protein kinase family.

The protein localises to the cytoplasm. It is found in the perinuclear region. Its subcellular location is the golgi apparatus. The protein resides in the trans-Golgi network. It localises to the cell junction. The protein localises to the focal adhesion. It is found in the cytoplasmic vesicle. Its subcellular location is the clathrin-coated vesicle. It carries out the reaction L-seryl-[protein] + ATP = O-phospho-L-seryl-[protein] + ADP + H(+). The enzyme catalyses L-threonyl-[protein] + ATP = O-phospho-L-threonyl-[protein] + ADP + H(+). Associates with cyclin G and CDK5. Seems to act as an auxilin homolog that is involved in the uncoating of clathrin-coated vesicles by Hsc70 in non-neuronal cells. Expression oscillates slightly during the cell cycle, peaking at G1. May play a role in clathrin-mediated endocytosis and intracellular trafficking, and in the dynamics of clathrin assembly/disassembly. In Mus musculus (Mouse), this protein is Cyclin-G-associated kinase.